A 250-amino-acid polypeptide reads, in one-letter code: Ribosomal RNA small subunit methyltransferase J (250 aa).

S-adenosyl-L-methionine-binding positions include 101–102 (RD), 117–118 (ER), 153–154 (SS), and D171.

The protein belongs to the methyltransferase superfamily. RsmJ family.

The protein resides in the cytoplasm. The enzyme catalyses guanosine(1516) in 16S rRNA + S-adenosyl-L-methionine = N(2)-methylguanosine(1516) in 16S rRNA + S-adenosyl-L-homocysteine + H(+). Functionally, specifically methylates the guanosine in position 1516 of 16S rRNA. This chain is Ribosomal RNA small subunit methyltransferase J, found in Shigella flexneri serotype 5b (strain 8401).